We begin with the raw amino-acid sequence, 371 residues long: Zinc finger CCCH domain-containing protein 21 (371 aa).

The tract at residues 1–64 (MPPKQQPKAD…AAKKKKEEEK (64 aa)) is disordered. Basic and acidic residues predominate over residues 10 to 23 (DLAKKQKQVEDKTF). Residues 34–46 (VQKYVQSLKQSVQ) are compositionally biased toward polar residues. 2 consecutive C3H1-type zinc fingers follow at residues 88–115 (DPKS…HDLN) and 159–197 (KPTD…HALP). 2 coiled-coil regions span residues 205–237 (QMKA…ATQM) and 283–317 (FVDD…GTSK). The disordered stretch occupies residues 290 to 371 (CEEYEREREQ…IREPNDEGSS (82 aa)). Residues 292-312 (EYEREREQEETEQKAKNKEAE) are compositionally biased toward basic and acidic residues. The segment covering 330 to 352 (NEEEEDDDDDDDDLDMDELDELE) has biased composition (acidic residues).

The sequence is that of Zinc finger CCCH domain-containing protein 21 from Arabidopsis thaliana (Mouse-ear cress).